The chain runs to 648 residues: Transketolase (648 aa).

His-22 serves as a coordination point for substrate. Residues His-62 and 109–111 (GPL) each bind thiamine diphosphate. Asp-150 is a Mg(2+) binding site. Residues Gly-151 and Asn-180 each coordinate thiamine diphosphate. Asn-180 and Val-182 together coordinate Mg(2+). Substrate is bound by residues His-252, Arg-345, and Ser-372. Thiamine diphosphate is bound at residue His-252. Glu-397 (proton donor) is an active-site residue. Thiamine diphosphate is bound at residue Phe-423. Substrate is bound by residues His-447, Asp-455, and Arg-506.

This sequence belongs to the transketolase family. As to quaternary structure, homodimer. Mg(2+) serves as cofactor. Ca(2+) is required as a cofactor. Requires Mn(2+) as cofactor. It depends on Co(2+) as a cofactor. The cofactor is thiamine diphosphate.

The catalysed reaction is D-sedoheptulose 7-phosphate + D-glyceraldehyde 3-phosphate = aldehydo-D-ribose 5-phosphate + D-xylulose 5-phosphate. In terms of biological role, catalyzes the transfer of a two-carbon ketol group from a ketose donor to an aldose acceptor, via a covalent intermediate with the cofactor thiamine pyrophosphate. The polypeptide is Transketolase (tkt) (Mycoplasma genitalium (strain ATCC 33530 / DSM 19775 / NCTC 10195 / G37) (Mycoplasmoides genitalium)).